Consider the following 171-residue polypeptide: CASP-like protein 1C3 (171 aa).

Residues 1-6 (MVKPKR) lie on the Cytoplasmic side of the membrane. The chain crosses the membrane as a helical span at residues 7 to 27 (LLSLLLRLIAFGATLAAVIIM). Topologically, residues 28 to 52 (ATSHEKGSFFALSYEAKYSDTPAFK) are extracellular. Residues 53 to 73 (YFVIANAIVTVYGFLALFIPS) form a helical membrane-spanning segment. Over 74–79 (ESPLWR) the chain is Cytoplasmic. The helical transmembrane segment at 80–100 (LVLALDLVFTMLLISSISAAL) threads the bilayer. Residues 101–130 (AVAQVGKKGNSSAGWLPVCGQVTKYCNQVT) lie on the Extracellular side of the membrane. The N-linked (GlcNAc...) asparagine glycan is linked to N110. Residues 131–151 (GALVAGFIAIITYIILLLYSI) traverse the membrane as a helical segment. At 152 to 171 (YTFLNSLLGKTPCRLSSPGI) the chain is on the cytoplasmic side.

Belongs to the Casparian strip membrane proteins (CASP) family. Homodimer and heterodimers.

The protein localises to the cell membrane. The protein is CASP-like protein 1C3 of Populus trichocarpa (Western balsam poplar).